We begin with the raw amino-acid sequence, 263 residues long: Putative aliphatic sulfonates transport permease protein SsuC (263 aa).

The Cytoplasmic portion of the chain corresponds to 1–13; it reads MATPVKKWLLRVA. A helical transmembrane segment spans residues 14-34; it reads PWFLPVGIVAVWQLASSVGWL. Residues 35 to 43 lie on the Periplasmic side of the membrane; it reads STRILPSPE. A helical transmembrane segment spans residues 44–64; sequence GVVTAFWTLSASGELWQHLAI. The region spanning 58-242 is the ABC transmembrane type-1 domain; it reads LWQHLAISSW…LLGKLADVSA (185 aa). The Cytoplasmic portion of the chain corresponds to 65 to 68; sequence SSWR. Residues 69–89 traverse the membrane as a helical segment; sequence ALIGFSIGGSLGLILGLISGL. At 90–102 the chain is on the periplasmic side; it reads SRWGERLLDTSIQ. Residues 103–122 form a helical membrane-spanning segment; that stretch reads MLRNVPHLALIPLVILWFGI. Residues 123-125 are Cytoplasmic-facing; that stretch reads DES. A helical membrane pass occupies residues 126–148; it reads AKIFLVALGTLFPIYINTWHGIR. Topologically, residues 149 to 164 are periplasmic; the sequence is NIDRGLVEMARSYGLS. The chain crosses the membrane as a helical span at residues 165–185; that stretch reads GIPLFIHVILPGALPSIMVGV. Residues 186–187 lie on the Cytoplasmic side of the membrane; the sequence is RF. A helical membrane pass occupies residues 188 to 208; sequence ALGLMWLTLIVAETISANSGI. Over 209-217 the chain is Periplasmic; sequence GYLAMNARE. Residues 218–238 form a helical membrane-spanning segment; sequence FLQTDVVVVAIILYALLGKLA. Over 239-263 the chain is Cytoplasmic; it reads DVSAQLLERLWLRWNPAYHLKEATV.

Belongs to the binding-protein-dependent transport system permease family. CysTW subfamily.

Its subcellular location is the cell inner membrane. Functionally, part of a binding-protein-dependent transport system for aliphatic sulfonates. Probably responsible for the translocation of the substrate across the membrane. The sequence is that of Putative aliphatic sulfonates transport permease protein SsuC (ssuC) from Escherichia coli (strain K12).